The sequence spans 393 residues: Protein TsgA (393 aa).

The Cytoplasmic portion of the chain corresponds to 1 to 10 (MTNSNRIKLT). The chain crosses the membrane as a helical span at residues 11–31 (WISFLSYALTGALVIVTGMVM). Residues 32-50 (GNIADYFHLPVSSMSNTFT) are Periplasmic-facing. Residues 51–71 (FLNAGILISIFLNAWLMEIIP) form a helical membrane-spanning segment. Over 72–77 (LKTQLR) the chain is Cytoplasmic. Residues 78 to 98 (FGFILMVLAVAGLMFGHSLAL) traverse the membrane as a helical segment. Over 99-100 (FS) the chain is Periplasmic. Residues 101–121 (AAMFVLGLVSGITMSIGTFLI) traverse the membrane as a helical segment. The Cytoplasmic segment spans residues 122–133 (TQLYEGRQRGSR). The helical transmembrane segment at 134 to 154 (LLFTDSFFSMAGMIFPMVAAF) threads the bilayer. Topologically, residues 155–161 (LLARSIE) are periplasmic. The chain crosses the membrane as a helical span at residues 162-182 (WYWVYACIGLVYLAIFILTFG). Residues 183-205 (CEFPALGKHAQHSQAPVVKEKWG) lie on the Cytoplasmic side of the membrane. The helical transmembrane segment at 206-226 (IGVLFLAVAALCYILGQLGFI) threads the bilayer. At 227–244 (SWVPEYAKGLGMSLNDAG) the chain is on the periplasmic side. A helical transmembrane segment spans residues 245–265 (ALVSDFWMSYMFGMWAFSFIL). The Cytoplasmic portion of the chain corresponds to 266–272 (RFFDLQR). Residues 273–293 (ILTVLAGMAAVLMYLFITGTQ) traverse the membrane as a helical segment. At 294-297 (AHMP) the chain is on the periplasmic side. A helical transmembrane segment spans residues 298–318 (WFILTLGFFSSAIYTSIITLG). Residues 319-331 (SQQTKVASPKLVN) are Cytoplasmic-facing. Residues 332–352 (FILTCGTIGTMLTFVVTGPIV) traverse the membrane as a helical segment. Residues 353-360 (AHSGPQAA) are Periplasmic-facing. The helical transmembrane segment at 361 to 381 (LLTANGLYAVVFVMCFALGFV) threads the bilayer. The Cytoplasmic portion of the chain corresponds to 382 to 393 (SRHRQHSAPATH).

This sequence belongs to the major facilitator superfamily. TsgA family.

The protein localises to the cell inner membrane. This is Protein TsgA from Salmonella choleraesuis (strain SC-B67).